The following is a 99-amino-acid chain: Integration host factor subunit alpha (99 aa).

The protein belongs to the bacterial histone-like protein family. Heterodimer of an alpha and a beta chain.

This protein is one of the two subunits of integration host factor, a specific DNA-binding protein that functions in genetic recombination as well as in transcriptional and translational control. This chain is Integration host factor subunit alpha, found in Nitrosococcus oceani (strain ATCC 19707 / BCRC 17464 / JCM 30415 / NCIMB 11848 / C-107).